We begin with the raw amino-acid sequence, 548 residues long: T-complex protein 1 subunit theta (548 aa).

The residue at position 2 (Ala-2) is an N-acetylalanine. Ser-23 carries the post-translational modification Phosphoserine. Residue Tyr-30 is modified to Phosphotyrosine. Residues Tyr-47 and Gly-48 each coordinate ADP. Residue Asp-99 coordinates Mg(2+). Gly-100, Thr-101, Asn-102, and Phe-103 together coordinate ADP. ATP-binding residues include Gly-100, Thr-101, and Asn-102. Phosphoserine is present on Ser-162. ADP contacts are provided by Met-169, Ser-170, and Lys-171. Positions 170 and 171 each coordinate ATP. Residues Lys-224, Lys-254, and Lys-260 each participate in a glycyl lysine isopeptide (Lys-Gly) (interchain with G-Cter in SUMO2) cross-link. Phosphoserine occurs at positions 269 and 317. 2 positions are modified to N6-acetyllysine: Lys-318 and Lys-400. Gly-412 is a binding site for ADP. Gly-412 contacts ATP. A Glycyl lysine isopeptide (Lys-Gly) (interchain with G-Cter in SUMO1) cross-link involves residue Lys-459. The residue at position 466 (Lys-466) is an N6-acetyllysine. Asp-499 lines the ADP pocket. Residues Asp-499 and Lys-504 each contribute to the ATP site. Position 505 is a phosphotyrosine (Tyr-505). Residues 529-548 (PAGGPKPPSGKKDWDDDQND) are disordered. Lys-534 is covalently cross-linked (Glycyl lysine isopeptide (Lys-Gly) (interchain with G-Cter in SUMO2)). Residue Ser-537 is modified to Phosphoserine. A Glycyl lysine isopeptide (Lys-Gly) (interchain with G-Cter in SUMO2) cross-link involves residue Lys-539.

This sequence belongs to the TCP-1 chaperonin family. As to quaternary structure, component of the chaperonin-containing T-complex (TRiC), a hexadecamer composed of two identical back-to-back stacked rings enclosing a protein folding chamber. Each ring is made up of eight different subunits: TCP1/CCT1, CCT2, CCT3, CCT4, CCT5, CCT6A/CCT6, CCT7, CCT8. Interacts with PACRG. Interacts with DNAAF4. Interacts with synaptic plasticity regulator PANTS.

The protein resides in the cytoplasm. It is found in the cytoskeleton. The protein localises to the microtubule organizing center. It localises to the centrosome. Its subcellular location is the cilium basal body. The enzyme catalyses ATP + H2O = ADP + phosphate + H(+). Component of the chaperonin-containing T-complex (TRiC), a molecular chaperone complex that assists the folding of actin, tubulin and other proteins upon ATP hydrolysis. The TRiC complex mediates the folding of WRAP53/TCAB1, thereby regulating telomere maintenance. As part of the TRiC complex may play a role in the assembly of BBSome, a complex involved in ciliogenesis regulating transports vesicles to the cilia. This chain is T-complex protein 1 subunit theta (Cct8), found in Mus musculus (Mouse).